Here is a 152-residue protein sequence, read N- to C-terminus: Superoxide dismutase [Cu-Zn] 2 (152 aa).

Residues H45, H47, and H62 each coordinate Cu cation. A disulfide bridge links C56 with C145. Zn(2+)-binding residues include H62, H70, H79, and D82. H119 is a binding site for Cu cation.

Belongs to the Cu-Zn superoxide dismutase family. Homodimer. Cu cation is required as a cofactor. Zn(2+) serves as cofactor.

The protein resides in the cytoplasm. The enzyme catalyses 2 superoxide + 2 H(+) = H2O2 + O2. Functionally, destroys radicals which are normally produced within the cells and which are toxic to biological systems. In Solanum lycopersicum (Tomato), this protein is Superoxide dismutase [Cu-Zn] 2 (SODCC.5).